An 840-amino-acid polypeptide reads, in one-letter code: Wings apart-like protein 2 (840 aa).

Disordered regions lie at residues 1–37 (MMERTYGRRKPGMLNDDVSRAEHIFPSSSSPELEPVD), 56–78 (SDNDFSEKRNKRPRNGGGGFGSN), and 532–594 (FDLE…DHHV). Positions 546-557 (KQKKSKGQKRKG) are enriched in basic residues. Over residues 558–567 (SYRDKKDERS) the composition is skewed to basic and acidic residues. Residues 569–585 (QLFSSQEESNHGLNSQE) are compositionally biased toward polar residues. Positions 764–819 (KEAEKMIVEAYSALLLAFLSTESRSIRNAIRDYLPKRDMAILVPVLDRFVAFHTTL) constitute a WAPL domain.

This sequence belongs to the WAPL family. Interacts with the cohesin complex throughout the cell cycle. Expressed in roots, leaves, buds and siliques.

It is found in the nucleus. Its subcellular location is the chromosome. Functionally, regulator of sister chromatid cohesion in meiosis which negatively regulates cohesin association with chromatin, acting as an antagonist of CTF7. Cohesion ensures that chromosome partitioning is accurate in both meiotic and mitotic cells and plays an important role in DNA repair. Essential for the prophase removal of cohesin during meiosis thus determining the timely release of meiotic cohesion. Important for proper spindle attachment and assembly during meiosis. Helps to prevent abnormal centromere association during prophase I in meiocytes. Required for early embryonic patterning. Also involved in chromosome segregation during mitosis. In Arabidopsis thaliana (Mouse-ear cress), this protein is Wings apart-like protein 2.